Here is a 261-residue protein sequence, read N- to C-terminus: Thiamine thiazole synthase (261 aa).

NAD(+)-binding positions include Ser40, 59–60 (ER), Gly67, Val133, and 159–161 (HID). Residues Asp161 and His176 each contribute to the Fe cation site. Residues Ser179 and Met226 each contribute to the NAD(+) site. A glycine-binding site is contributed by Arg236.

The protein belongs to the THI4 family. In terms of assembly, homooctamer; tetramer of dimers. The cofactor is Fe(2+).

The enzyme catalyses hydrogen sulfide + glycine + NAD(+) = ADP-5-ethyl-4-methylthiazole-2-carboxylate + nicotinamide + 3 H2O + H(+). It functions in the pathway cofactor biosynthesis; thiamine diphosphate biosynthesis. Its function is as follows. Involved in the biosynthesis of the thiazole moiety of thiamine. Catalyzes the conversion of NAD and glycine to adenosine diphosphate 5-(2-hydroxyethyl)-4-methylthiazole-2-carboxylate (ADT), an adenylated thiazole intermediate, using free sulfide as a source of sulfur. This chain is Thiamine thiazole synthase, found in Methanococcus maripaludis (strain C5 / ATCC BAA-1333).